The primary structure comprises 296 residues: dTDP-rhamnosyl transferase RfbF (296 aa).

Belongs to the glycosyltransferase 2 family.

It functions in the pathway bacterial outer membrane biogenesis; lipopolysaccharide biosynthesis. The protein is dTDP-rhamnosyl transferase RfbF (rfbF) of Shigella flexneri.